Reading from the N-terminus, the 248-residue chain is GTP cyclohydrolase 1 type 2 homolog (248 aa).

A divalent metal cation is bound by residues His64, His65, Asp101, His216, and Glu220.

This sequence belongs to the GTP cyclohydrolase I type 2/NIF3 family. As to quaternary structure, homohexamer.

The polypeptide is GTP cyclohydrolase 1 type 2 homolog (Borreliella burgdorferi (strain ATCC 35210 / DSM 4680 / CIP 102532 / B31) (Borrelia burgdorferi)).